Reading from the N-terminus, the 76-residue chain is Conotoxin Cal5a L3 (76 aa).

The signal sequence occupies residues 1–22; sequence MRFYIGLMAALMLTSVLRTDSA. Positions 23–42 are excised as a propeptide; the sequence is SVGQTGTKSELAVIERVIRQ. A 4-hydroxyproline modification is found at Pro50. 4-hydroxyproline; partial is present on residues Pro58, Pro62, and Pro64.

The protein belongs to the conotoxin T superfamily. Post-translationally, contains 2 disulfide bonds that can be either 'C1-C3, C2-C4' or 'C1-C4, C2-C3', since these disulfide connectivities have been observed for conotoxins with cysteine framework V (for examples, see AC P0DQQ7 and AC P81755). In terms of tissue distribution, expressed by the venom duct.

The protein resides in the secreted. Its function is as follows. Probable neurotoxin with unknown target. Possibly targets ion channels. This chain is Conotoxin Cal5a L3, found in Californiconus californicus (California cone).